The chain runs to 687 residues: Ribonuclease E (687 aa).

The 83-residue stretch at 35–117 (GDIYLGVVEN…LTGNITLPGR (83 aa)) folds into the S1 motif domain. D296 and D339 together coordinate Mg(2+). Zn(2+) is bound by residues C397 and C400. Residues 650–687 (PIKLTETMEESEVNAASTANRRRRRRSSASDSDTGEDS) form a disordered region. The short motif at 670-678 (RRRRRRSSA) is the C4 Arg-rich motif, necessary and sufficient to confer PNPase binding on another protein element.

Belongs to the RNase E/G family. In terms of assembly, may form homodimers or higher order multimers. Interacts with polynucleotide phosphorylase (PNPase, pnp) via the C4 Arg-rich motif (residues 670-678). A homotetramer formed by a dimer of dimers. Mg(2+) is required as a cofactor. Requires Zn(2+) as cofactor.

The protein resides in the cytoplasm. The catalysed reaction is Endonucleolytic cleavage of single-stranded RNA in A- and U-rich regions.. Functionally, endoribonuclease that plays a central role in rRNA and tRNA processing and mRNA decay. Has been shown to act on 9S rRNA (the precursor of 5S rRNA). In Nostoc sp. (strain PCC 7120 / SAG 25.82 / UTEX 2576), this protein is Ribonuclease E.